Consider the following 443-residue polypeptide: Adenylosuccinate synthetase (443 aa).

Residues 12–18 and 40–42 each bind GTP; these read GDEGKGK and GHT. Catalysis depends on Asp13, which acts as the Proton acceptor. Mg(2+) is bound by residues Asp13 and Gly40. Residues 13-16, 38-41, Thr128, Arg142, Gln223, Thr238, and Arg302 each bind IMP; these read DEGK and NAGH. Catalysis depends on His41, which acts as the Proton donor. 298-304 serves as a coordination point for substrate; that stretch reads TTTGRRR. GTP is bound by residues Arg304, 330-332, and 412-414; these read KLD and SLG.

Belongs to the adenylosuccinate synthetase family. As to quaternary structure, homodimer. It depends on Mg(2+) as a cofactor.

The protein localises to the cytoplasm. The catalysed reaction is IMP + L-aspartate + GTP = N(6)-(1,2-dicarboxyethyl)-AMP + GDP + phosphate + 2 H(+). It functions in the pathway purine metabolism; AMP biosynthesis via de novo pathway; AMP from IMP: step 1/2. Plays an important role in the de novo pathway of purine nucleotide biosynthesis. Catalyzes the first committed step in the biosynthesis of AMP from IMP. This Picosynechococcus sp. (strain ATCC 27264 / PCC 7002 / PR-6) (Agmenellum quadruplicatum) protein is Adenylosuccinate synthetase.